The chain runs to 890 residues: MLLNMNLQELKQKYNYDVATKMMQQYLDIKFAHLDCLLLFRMGDFYEMFYEDAILASNVLGIALTKRGKNGEEEIAMCGVPYHALENYLTKLIEENYKVAICDQLETPEEAKNRGGYKAVVTRDVTRIITPGTIIEENLIASAEPNYLASLVIPKNKETASLCYVDLSTSEIVVVNVPETEILNELARLKPREILLSENLRSSNLADSIFKQLNFRITYQVDSFFAINKCKKIILDFYKMKDIKGIGEISSSQICAIGSVLEYLSLTQKQNIPHLPIPRIINFHSYMTIDFSTRRNLEIVTNSQGDSQGSLLSTLNHTVTKQGGRLLYNFLSSPLTNIAKINHRLNITEFFYSNLEIVKKIRELLKKTSDIERCLTRITMNRSSGRDLLSIKYTLETATIIKEVFFDAYGFNLPDFIEKIIKPLSGDAELYNLIDETIREDAPNNLNDGGIIKHEYHPKVAQLHDLINNGKLYIEKLKDQYRKETGIDSLKISHNNVIGLFIDITAKNVNKILDPKFIHRQTTVNHVRYTTAELQKLESELVNAKTLVISLEKELYADICSQVIEKASYLRMLASSLSGLDVFCNFAYIADEYDYVKPEFTDDLSFDIVKGRHPVVEKALQRESKSFVYNDCHLSELERIWLITGPNMAGKSTFLRQNAIIAIIAQIGSFVPAKSAKIGVVDKIFSRIGAADDLIKGQSTFMAEMLETSAILAQSTKNSLIILDEVGRGTSTYDGVSIAWSVLEYIHDKLKCRCLFATHYHELTVMSNFLPALQNYTIAIEESGKDILFLHNIISGAADRSYGLHVAALAGLPESVINRAEQILLKFEKTSTGKGKNILSTESNNLSLFYLEPNKTTISSKLDKKFSTIDPDKLSPKEALELIYELKKLV.

Residue 645–652 (GPNMAGKS) coordinates ATP.

This sequence belongs to the DNA mismatch repair MutS family.

Its function is as follows. This protein is involved in the repair of mismatches in DNA. It is possible that it carries out the mismatch recognition step. This protein has a weak ATPase activity. This is DNA mismatch repair protein MutS from Rickettsia rickettsii (strain Iowa).